Reading from the N-terminus, the 183-residue chain is Dual-action ribosomal maturation protein DarP (183 aa).

Positions 1–21 are disordered; sequence MKQKPEDWLNDVPDNQEDDED.

This sequence belongs to the DarP family.

It localises to the cytoplasm. Functionally, member of a network of 50S ribosomal subunit biogenesis factors which assembles along the 30S-50S interface, preventing incorrect 23S rRNA structures from forming. Promotes peptidyl transferase center (PTC) maturation. The protein is Dual-action ribosomal maturation protein DarP of Pectobacterium atrosepticum (strain SCRI 1043 / ATCC BAA-672) (Erwinia carotovora subsp. atroseptica).